A 317-amino-acid polypeptide reads, in one-letter code: (R)-citramalyl-CoA lyase (317 aa).

One can recognise a Pyruvate carboxyltransferase domain in the interval 4-281 (VTIVDVAPRD…PTGIDLSALI (278 aa)). Substrate is bound at residue arginine 12. A divalent metal cation is bound by residues aspartate 13, histidine 214, and histidine 216. Cysteine 247 is a catalytic residue. Asparagine 256 is a binding site for a divalent metal cation.

The protein belongs to the HMG-CoA lyase family. Homodimer. It depends on Mn(2+) as a cofactor. The cofactor is Co(2+). Requires Ni(2+) as cofactor. Mg(2+) serves as cofactor.

The enzyme catalyses (3R)-citramalyl-CoA = pyruvate + acetyl-CoA. Activated by dithioerythritol (DTE) (in vitro). Its function is as follows. Involved in the glyoxylate assimilation cycle used to regenerate acetyl-CoA and produce pyruvate as universal precursor for biosynthesis. Catalyzes the cleavage of (R)-citramalyl-CoA to yield acetyl-CoA and pyruvate. This Chloroflexus aurantiacus (strain ATCC 29366 / DSM 635 / J-10-fl) protein is (R)-citramalyl-CoA lyase (ccl).